Reading from the N-terminus, the 353-residue chain is Photosystem II protein D1 (353 aa).

An N-acetylthreonine modification is found at threonine 2. Threonine 2 is modified (phosphothreonine). A run of 3 helical transmembrane segments spans residues 29–46 (YIGW…TATS), 118–133 (HFLL…EWEL), and 142–156 (WIAV…AATA). Histidine 118 lines the chlorophyll a pocket. Tyrosine 126 is a pheophytin a binding site. 2 residues coordinate [CaMn4O5] cluster: aspartate 170 and glutamate 189. Residues 197-218 (FHMLGVAGVFGGSLFSAMHGSL) traverse the membrane as a helical segment. Histidine 198 provides a ligand contact to chlorophyll a. A quinone contacts are provided by residues histidine 215 and 264-265 (SF). Histidine 215 lines the Fe cation pocket. Histidine 272 provides a ligand contact to Fe cation. A helical membrane pass occupies residues 274–288 (FLAAWPVIGIWFTSL). [CaMn4O5] cluster contacts are provided by histidine 332, glutamate 333, aspartate 342, and alanine 344. A propeptide spanning residues 345-353 (AVEAPSTIG) is cleaved from the precursor.

The protein belongs to the reaction center PufL/M/PsbA/D family. PSII is composed of 1 copy each of membrane proteins PsbA, PsbB, PsbC, PsbD, PsbE, PsbF, PsbH, PsbI, PsbJ, PsbK, PsbL, PsbM, PsbT, PsbX, PsbY, PsbZ, Psb30/Ycf12, at least 3 peripheral proteins of the oxygen-evolving complex and a large number of cofactors. It forms dimeric complexes. The cofactor is The D1/D2 heterodimer binds P680, chlorophylls that are the primary electron donor of PSII, and subsequent electron acceptors. It shares a non-heme iron and each subunit binds pheophytin, quinone, additional chlorophylls, carotenoids and lipids. D1 provides most of the ligands for the Mn4-Ca-O5 cluster of the oxygen-evolving complex (OEC). There is also a Cl(-1) ion associated with D1 and D2, which is required for oxygen evolution. The PSII complex binds additional chlorophylls, carotenoids and specific lipids.. Tyr-161 forms a radical intermediate that is referred to as redox-active TyrZ, YZ or Y-Z. Post-translationally, C-terminally processed by CTPA; processing is essential to allow assembly of the oxygen-evolving complex and thus photosynthetic growth.

It is found in the plastid. It localises to the chloroplast thylakoid membrane. It carries out the reaction 2 a plastoquinone + 4 hnu + 2 H2O = 2 a plastoquinol + O2. Its function is as follows. Photosystem II (PSII) is a light-driven water:plastoquinone oxidoreductase that uses light energy to abstract electrons from H(2)O, generating O(2) and a proton gradient subsequently used for ATP formation. It consists of a core antenna complex that captures photons, and an electron transfer chain that converts photonic excitation into a charge separation. The D1/D2 (PsbA/PsbD) reaction center heterodimer binds P680, the primary electron donor of PSII as well as several subsequent electron acceptors. The sequence is that of Photosystem II protein D1 from Landoltia punctata (Dotted duckmeat).